The chain runs to 341 residues: DnaJ homolog subfamily C member 22 (341 aa).

Positions 3-50 (KGLLVTYALWAVGGPAGLHHLYLGRDSHALLWMLTLGGGGLGWLWEFW) constitute a TM2 domain. Helical transmembrane passes span 5 to 25 (LLVT…HLYL), 30 to 50 (HALL…WEFW), 81 to 101 (FAAQ…SLSS), 105 to 125 (FYIV…AAVG), 135 to 155 (LGAA…ILPI), 185 to 205 (LGLA…CNTA), and 218 to 238 (FLNW…VLLL). Positions 277–341 (LAYQVLGLSE…QPRKPRGSRR (65 aa)) constitute a J domain.

The protein localises to the membrane. May function as a co-chaperone. The chain is DnaJ homolog subfamily C member 22 (DNAJC22) from Pongo abelii (Sumatran orangutan).